Reading from the N-terminus, the 365-residue chain is Sulfate/thiosulfate import ATP-binding protein CysA (365 aa).

The ABC transporter domain maps to 3–237 (IEIARIKKSF…PATRFVLEFM (235 aa)). 35–42 (GPSGSGKT) provides a ligand contact to ATP.

This sequence belongs to the ABC transporter superfamily. Sulfate/tungstate importer (TC 3.A.1.6) family. The complex is composed of two ATP-binding proteins (CysA), two transmembrane proteins (CysT and CysW) and a solute-binding protein (CysP).

It localises to the cell inner membrane. It carries out the reaction sulfate(out) + ATP + H2O = sulfate(in) + ADP + phosphate + H(+). The catalysed reaction is thiosulfate(out) + ATP + H2O = thiosulfate(in) + ADP + phosphate + H(+). In terms of biological role, part of the ABC transporter complex CysAWTP involved in sulfate/thiosulfate import. Responsible for energy coupling to the transport system. This is Sulfate/thiosulfate import ATP-binding protein CysA from Salmonella typhimurium (strain LT2 / SGSC1412 / ATCC 700720).